Consider the following 293-residue polypeptide: Movement protein BC1 (293 aa).

It belongs to the begomovirus movement protein BC1 family. In terms of assembly, binds to dimeric supercoiled plasmid DNA. In terms of processing, phosphorylated.

The protein resides in the host cell membrane. It is found in the host microsome membrane. Its subcellular location is the host endoplasmic reticulum membrane. Transports viral genome to neighboring plant cells directly through plasmosdesmata, without any budding. The movement protein allows efficient cell to cell propagation, by bypassing the host cell wall barrier. Begomovirus genome is shuttled out of nucleus by Nuclear shuttle protein (NSP) and the movement protein transports the DNA-NSP complex to cell plasmodesmata and facilitates further movement across the cell wall. This chain is Movement protein BC1, found in Potato yellow mosaic virus (isolate Venezuela) (PYMV).